A 524-amino-acid polypeptide reads, in one-letter code: METQPQQPPPPPVAEKLNPKLEKELNLESLKTRAVSLAKAIARILEDFDAYGRTNTTPKWQDILGQYSMVNLELFNIVEEVKRVSNAFVVLPKNVNAMNAAILPVMLSSKLLPEMETDDNAKREQLLQGVQSLPIPMQIERLKARMDMIAAACENAERVLADTRKAYGFGTRQGPSMLPTMDKGQAAKIQEQEKMLRDAVNDGKGTQLPPDQRQITTALPPHLADVLIINDAGKIALPGQSNNINNQGMMQVSGTQFVGRSAASPSGPNFDNTTSPLPYSNSPRATGMVNVPSPQHQIQQQQFQQQQQRSKLMQLPQHQQQQLLAQQQQQLRQSSMQGLGQSQIPALHDMHGQAQQKFQTSHGQHQMPYSQPMGAHQQFQARQLSGGHIQHSMSQGQLNPAMNRHLNQFSGGANSALFTSAQGSPSSQMIPNMSSMQSQTLVPRMQQFGVSGTNPQRSHSSQMLGDQMFNTSGMMQTQQTQIQQSQQQQQQQQQGGYGNMQTNQQSLQPNNMMQNAQQRHQNPQ.

M1 carries the post-translational modification N-acetylmethionine. Residues 137 to 162 (MQIERLKARMDMIAAACENAERVLAD) are a coiled coil. Disordered regions lie at residues 291–315 (VPSPQHQIQQQQFQQQQQRSKLMQL) and 474–524 (MMQT…QNPQ). 2 stretches are compositionally biased toward low complexity: residues 295 to 315 (QHQIQQQQFQQQQQRSKLMQL) and 474 to 505 (MMQTQQTQIQQSQQQQQQQQQGGYGNMQTNQQ). Residues 506 to 524 (SLQPNNMMQNAQQRHQNPQ) show a composition bias toward polar residues.

Belongs to the Mediator complex subunit 8 family. Component of the Mediator complex.

It localises to the nucleus. Functionally, component of the Mediator complex, a coactivator involved in the regulated transcription of nearly all RNA polymerase II-dependent genes. Mediator functions as a bridge to convey information from gene-specific regulatory proteins to the basal RNA polymerase II transcription machinery. The Mediator complex, having a compact conformation in its free form, is recruited to promoters by direct interactions with regulatory proteins and serves for the assembly of a functional preinitiation complex with RNA polymerase II and the general transcription factors. Regulator of both plant defense and flowering time. Involved in pollen tube growth. This is Mediator of RNA polymerase II transcription subunit 8 (MED8) from Arabidopsis thaliana (Mouse-ear cress).